The following is a 515-amino-acid chain: 2-isopropylmalate synthase (515 aa).

In terms of domain architecture, Pyruvate carboxyltransferase spans 5–267 (VIIFDTTLRD…STGIKHEEIH (263 aa)). The Mn(2+) site is built by aspartate 14, histidine 202, histidine 204, and asparagine 238. Positions 392–515 (KLNYLSVQSG…EMKQKKIATV (124 aa)) are regulatory domain.

The protein belongs to the alpha-IPM synthase/homocitrate synthase family. LeuA type 1 subfamily. In terms of assembly, homodimer. Requires Mn(2+) as cofactor.

It localises to the cytoplasm. It catalyses the reaction 3-methyl-2-oxobutanoate + acetyl-CoA + H2O = (2S)-2-isopropylmalate + CoA + H(+). It functions in the pathway amino-acid biosynthesis; L-leucine biosynthesis; L-leucine from 3-methyl-2-oxobutanoate: step 1/4. Functionally, catalyzes the condensation of the acetyl group of acetyl-CoA with 3-methyl-2-oxobutanoate (2-ketoisovalerate) to form 3-carboxy-3-hydroxy-4-methylpentanoate (2-isopropylmalate). In Vibrio parahaemolyticus serotype O3:K6 (strain RIMD 2210633), this protein is 2-isopropylmalate synthase.